The primary structure comprises 299 residues: Coenzyme PQQ synthesis protein B (299 aa).

The protein belongs to the PqqB family.

The protein operates within cofactor biosynthesis; pyrroloquinoline quinone biosynthesis. Its function is as follows. May be involved in the transport of PQQ or its precursor to the periplasm. This chain is Coenzyme PQQ synthesis protein B, found in Methylobacterium sp. (strain 4-46).